The sequence spans 211 residues: Protein CHLORORESPIRATORY REDUCTION 41, chloroplastic (211 aa).

A chloroplast-targeting transit peptide spans 1-38; it reads MASTSTLLLPSLSSKNLHIAVPIRTNSFVRRTTKFSTK. Residues 136–163 adopt a coiled-coil conformation; that stretch reads AKAGEIVAERAREEAEVLRDEGKVEERM.

As to quaternary structure, biogenesis factor component of the plastidial NDH subcomplex A.

It is found in the plastid. The protein localises to the chloroplast. The protein resides in the chloroplast stroma. In terms of biological role, required for both formation and activity of the chloroplast NAD(P)H dehydrogenase (NDH) complex of the photosynthetic electron transport chain. Functions in assembly or stabilization of the NDH complex; probably involved, together with NdhO and NdhH, in the formation of an NDH subcomplex A assembly intermediate (NAI500). The protein is Protein CHLORORESPIRATORY REDUCTION 41, chloroplastic of Arabidopsis thaliana (Mouse-ear cress).